A 956-amino-acid polypeptide reads, in one-letter code: Glycine dehydrogenase (decarboxylating) 2 (956 aa).

K706 is modified (N6-(pyridoxal phosphate)lysine).

This sequence belongs to the GcvP family. As to quaternary structure, the glycine cleavage system is composed of four proteins: P, T, L and H. Pyridoxal 5'-phosphate is required as a cofactor.

The catalysed reaction is N(6)-[(R)-lipoyl]-L-lysyl-[glycine-cleavage complex H protein] + glycine + H(+) = N(6)-[(R)-S(8)-aminomethyldihydrolipoyl]-L-lysyl-[glycine-cleavage complex H protein] + CO2. In terms of biological role, the glycine cleavage system catalyzes the degradation of glycine. The P protein binds the alpha-amino group of glycine through its pyridoxal phosphate cofactor; CO(2) is released and the remaining methylamine moiety is then transferred to the lipoamide cofactor of the H protein. In Colwellia psychrerythraea (strain 34H / ATCC BAA-681) (Vibrio psychroerythus), this protein is Glycine dehydrogenase (decarboxylating) 2.